Consider the following 622-residue polypeptide: Pyranose 2-oxidase (622 aa).

The signal sequence occupies residues 1–28 (MSASSSDPFHSFAKTSFTSKAAKRATAH). A propeptide spanning residues 29–37 (SLPPLPGPG) is cleaved from the precursor. At H167 the chain carries Tele-8alpha-FAD histidine. Substrate-binding residues include Q449 and H451. The active-site Proton acceptor is the H546. Residue N591 is part of the active site.

This sequence belongs to the GMC oxidoreductase family. In terms of assembly, homotetramer. The cofactor is FAD.

The protein localises to the periplasm. The catalysed reaction is D-glucose + O2 = 2-dehydro-D-glucose + H2O2. In terms of biological role, catalyzes the oxidation of various aldopyranoses and disaccharides on carbon-2 to the corresponding 2-keto sugars concomitant with the reduction of O(2) to H(2)O(2). Plays an important role in lignin degradation of wood rot fungi by supplying the essential cosubstrate H(2)O(2) for the ligninolytic peroxidases, lignin peroxidase and manganese-dependent peroxidase. The preferred substrate is D-glucose which is converted to 2-dehydro-D-glucose, an intermediate of a secondary metabolic pathway leading to the antibiotic cortalcerone. Also acts on D-xylose, together with D-glucose the major sugars derived from wood, on L-sorbose, D-galactose and 1,5-anhydroglucitol, a diagnostic marker of diabetes mellitus. This chain is Pyranose 2-oxidase (P2OX), found in Trametes hirsuta (White-rot fungus).